A 68-amino-acid polypeptide reads, in one-letter code: Large ribosomal subunit protein uL29 (68 aa).

It belongs to the universal ribosomal protein uL29 family.

This is Large ribosomal subunit protein uL29 from Limosilactobacillus reuteri (strain DSM 20016) (Lactobacillus reuteri).